Reading from the N-terminus, the 241-residue chain is Methylthioribulose-1-phosphate dehydratase (241 aa).

Residue cysteine 100 participates in substrate binding. The Zn(2+) site is built by histidine 117 and histidine 119. The Proton donor/acceptor role is filled by glutamate 146. Histidine 202 is a Zn(2+) binding site.

This sequence belongs to the aldolase class II family. MtnB subfamily. Zn(2+) serves as cofactor.

Its subcellular location is the cytoplasm. The enzyme catalyses 5-(methylsulfanyl)-D-ribulose 1-phosphate = 5-methylsulfanyl-2,3-dioxopentyl phosphate + H2O. It participates in amino-acid biosynthesis; L-methionine biosynthesis via salvage pathway; L-methionine from S-methyl-5-thio-alpha-D-ribose 1-phosphate: step 2/6. Its function is as follows. Catalyzes the dehydration of methylthioribulose-1-phosphate (MTRu-1-P) into 2,3-diketo-5-methylthiopentyl-1-phosphate (DK-MTP-1-P). This chain is Methylthioribulose-1-phosphate dehydratase, found in Ajellomyces dermatitidis (strain ER-3 / ATCC MYA-2586) (Blastomyces dermatitidis).